The primary structure comprises 852 residues: Envelope glycoprotein gp160 (852 aa).

Positions 1 to 32 are cleaved as a signal peptide; sequence MRVKGIKKNYQHLWRWGGMMLLGILMICSATD. Residues 33 to 680 lie on the Extracellular side of the membrane; sequence KLWVTVYYGV…ITNWLWYIKI (648 aa). An N-linked (GlcNAc...) asparagine; by host glycan is attached at asparagine 49. Cysteine 54 and cysteine 74 are oxidised to a cystine. N-linked (GlcNAc...) asparagine; by host glycans are attached at residues asparagine 88, asparagine 135, asparagine 138, asparagine 154, asparagine 158, asparagine 197, asparagine 234, asparagine 241, asparagine 262, asparagine 276, asparagine 289, asparagine 295, asparagine 301, asparagine 331, asparagine 354, and asparagine 360. Disulfide bonds link cysteine 119–cysteine 205, cysteine 126–cysteine 196, cysteine 131–cysteine 155, cysteine 218–cysteine 247, and cysteine 228–cysteine 239. The tract at residues 131–154 is V1; the sequence is CHDFNATNATSNSGKMMEGGEMKN. The interval 155–196 is V2; that stretch reads CSFNITTSIRDKMQKEYALFYKLDIVPIDNDKTNTRYRLISC. The tract at residues 296–329 is V3; it reads CTRPNNNTRKRITMGPGRVYYTTGQIIGDIRRAH. Residues cysteine 296 and cysteine 330 are joined by a disulfide bond. A CD4-binding loop region spans residues 362–372; sequence SSGGDPEIVMH. 2 disulfide bridges follow: cysteine 376-cysteine 439 and cysteine 383-cysteine 412. Residues 383–412 are V4; sequence CNTTQLFNSTWYRNTTGNITEGNSPITLPC. Asparagine 384, asparagine 390, asparagine 396, asparagine 400, asparagine 442, and asparagine 456 each carry an N-linked (GlcNAc...) asparagine; by host glycan. V5 regions lie at residues 454 to 467 and 457 to 467; these read NNNE…FRPG and ETTDTEIFRPG. A fusion peptide region spans residues 508–528; it reads AVGLGALFLGFLGAAGSTMGA. The tract at residues 570–588 is immunosuppression; that stretch reads KQLQARVLAVERYLKDQQL. The cysteines at positions 594 and 600 are disulfide-linked. Asparagine 607, asparagine 612, asparagine 621, asparagine 633, and asparagine 670 each carry an N-linked (GlcNAc...) asparagine; by host glycan. A coiled-coil region spans residues 629 to 663; the sequence is REIDNYTNLIYSLIEDSQIQQEKNEKELLELDKWA. Residues 658–679 are MPER; binding to GalCer; it reads ELDKWASLWNWFNITNWLWYIK. Residues 681 to 701 traverse the membrane as a helical segment; it reads FIMIVGGLIGLRIVFAVLSIV. Residues 702–852 lie on the Cytoplasmic side of the membrane; the sequence is NRVRQGYSPL…IRQGLERALQ (151 aa). The short motif at 708–711 is the YXXL motif; contains endocytosis signal element; that stretch reads YSPL. Positions 715-741 are disordered; the sequence is TRLPGRRGPDRPEGIEEEGGERDRDRS.

This sequence belongs to the HIV-1 env protein family. As to quaternary structure, the mature envelope protein (Env) consists of a homotrimer of non-covalently associated gp120-gp41 heterodimers. The resulting complex protrudes from the virus surface as a spike. There seems to be as few as 10 spikes on the average virion. Interacts with host CD4, CCR5 and CXCR4. Gp120 also interacts with the C-type lectins CD209/DC-SIGN and CLEC4M/DC-SIGNR (collectively referred to as DC-SIGN(R)). Gp120 and gp41 interact with GalCer. Gp120 interacts with host ITGA4/ITGB7 complex; on CD4+ T-cells, this interaction results in rapid activation of integrin ITGAL/LFA-1, which facilitates efficient cell-to-cell spreading of HIV-1. Gp120 interacts with cell-associated heparan sulfate; this interaction increases virus infectivity on permissive cells and may be involved in infection of CD4- cells. The mature envelope protein (Env) consists of a homotrimer of non-covalently associated gp120-gp41 heterodimers. The resulting complex protrudes from the virus surface as a spike. There seems to be as few as 10 spikes on the average virion. Post-translationally, highly glycosylated by host. The high number of glycan on the protein is reffered to as 'glycan shield' because it contributes to hide protein sequence from adaptive immune system. Palmitoylation of the transmembrane protein and of Env polyprotein (prior to its proteolytic cleavage) is essential for their association with host cell membrane lipid rafts. Palmitoylation is therefore required for envelope trafficking to classical lipid rafts, but not for viral replication. In terms of processing, specific enzymatic cleavages in vivo yield mature proteins. Envelope glycoproteins are synthesized as an inactive precursor that is heavily N-glycosylated and processed likely by host cell furin in the Golgi to yield the mature SU and TM proteins. The cleavage site between SU and TM requires the minimal sequence [KR]-X-[KR]-R. About 2 of the 9 disulfide bonds of gp41 are reduced by P4HB/PDI, following binding to CD4 receptor.

It is found in the virion membrane. The protein localises to the host cell membrane. Its subcellular location is the host endosome membrane. Functionally, oligomerizes in the host endoplasmic reticulum into predominantly trimers. In a second time, gp160 transits in the host Golgi, where glycosylation is completed. The precursor is then proteolytically cleaved in the trans-Golgi and thereby activated by cellular furin or furin-like proteases to produce gp120 and gp41. In terms of biological role, attaches the virus to the host lymphoid cell by binding to the primary receptor CD4. This interaction induces a structural rearrangement creating a high affinity binding site for a chemokine coreceptor like CXCR4 and/or CCR5. Acts as a ligand for CD209/DC-SIGN and CLEC4M/DC-SIGNR, which are respectively found on dendritic cells (DCs), and on endothelial cells of liver sinusoids and lymph node sinuses. These interactions allow capture of viral particles at mucosal surfaces by these cells and subsequent transmission to permissive cells. HIV subverts the migration properties of dendritic cells to gain access to CD4+ T-cells in lymph nodes. Virus transmission to permissive T-cells occurs either in trans (without DCs infection, through viral capture and transmission), or in cis (following DCs productive infection, through the usual CD4-gp120 interaction), thereby inducing a robust infection. In trans infection, bound virions remain infectious over days and it is proposed that they are not degraded, but protected in non-lysosomal acidic organelles within the DCs close to the cell membrane thus contributing to the viral infectious potential during DCs' migration from the periphery to the lymphoid tissues. On arrival at lymphoid tissues, intact virions recycle back to DCs' cell surface allowing virus transmission to CD4+ T-cells. Acts as a class I viral fusion protein. Under the current model, the protein has at least 3 conformational states: pre-fusion native state, pre-hairpin intermediate state, and post-fusion hairpin state. During fusion of viral and target intracellular membranes, the coiled coil regions (heptad repeats) assume a trimer-of-hairpins structure, positioning the fusion peptide in close proximity to the C-terminal region of the ectodomain. The formation of this structure appears to drive apposition and subsequent fusion of viral and target cell membranes. Complete fusion occurs in host cell endosomes and is dynamin-dependent, however some lipid transfer might occur at the plasma membrane. The virus undergoes clathrin-dependent internalization long before endosomal fusion, thus minimizing the surface exposure of conserved viral epitopes during fusion and reducing the efficacy of inhibitors targeting these epitopes. Membranes fusion leads to delivery of the nucleocapsid into the cytoplasm. This chain is Envelope glycoprotein gp160, found in Human immunodeficiency virus type 1 group M subtype B (isolate BRVA) (HIV-1).